A 352-amino-acid polypeptide reads, in one-letter code: Glycerol-1-phosphate dehydrogenase [NAD(P)+] (352 aa).

NAD(+)-binding positions include glycine 99–aspartate 103 and threonine 121–serine 124. Substrate is bound at residue aspartate 126. Serine 130 is an NAD(+) binding site. Aspartate 173 contacts substrate. Zn(2+)-binding residues include aspartate 173 and histidine 253. Histidine 257 contacts substrate. Zn(2+) is bound at residue histidine 269.

This sequence belongs to the glycerol-1-phosphate dehydrogenase family. Homodimer. Zn(2+) serves as cofactor.

Its subcellular location is the cytoplasm. The catalysed reaction is sn-glycerol 1-phosphate + NAD(+) = dihydroxyacetone phosphate + NADH + H(+). It carries out the reaction sn-glycerol 1-phosphate + NADP(+) = dihydroxyacetone phosphate + NADPH + H(+). It participates in membrane lipid metabolism; glycerophospholipid metabolism. With respect to regulation, totally inhibited by EDTA in vitro. Catalyzes the NAD(P)H-dependent reduction of dihydroxyacetonephosphate (DHAP or glycerone phosphate) to glycerol 1-phosphate (G1P). The G1P thus generated is used as the glycerophosphate backbone of phospholipids in the cellular membranes of Archaea. Is also able to catalyze the reverse reaction, i.e. the NAD(+)-dependent oxidation of G1P but not of G3P. Is not active toward glycerol, dihydroxyacetone, glyceraldehyde phosphate, and glycerol-2-phosphate. The polypeptide is Glycerol-1-phosphate dehydrogenase [NAD(P)+] (egsA) (Aeropyrum pernix (strain ATCC 700893 / DSM 11879 / JCM 9820 / NBRC 100138 / K1)).